A 617-amino-acid chain; its full sequence is Type IV inositol polyphosphate 5-phosphatase 6 (617 aa).

2 disordered regions span residues 30-62 (EFQA…KNTK) and 241-330 (DFDP…VLYS). The span at 242–253 (FDPSFRGSSSSH) shows a compositional bias: low complexity. Positions 254–290 (RPSDYSRRPSDYSRRPSDYSRRPSDYSRRPSDSRPSD) are enriched in basic and acidic residues. Residues 291–311 (YSRPSDYYSRPSDYSRPSDFS) show a composition bias toward low complexity. Catalytic stretches follow at residues 458–473 (DRVI…IALS) and 538–553 (KRRT…WFGE).

This sequence belongs to the inositol polyphosphate 5-phosphatase family. In terms of tissue distribution, broadly expressed in emerging organs. Mostly localized in procambium of growing organs. Restricted to vascular differentiating cells of young organs.

It carries out the reaction a 1,2-diacyl-sn-glycero-3-phospho-(1D-myo-inositol-4,5-bisphosphate) + H2O = a 1,2-diacyl-sn-glycero-3-phospho-(1D-myo-inositol 4-phosphate) + phosphate. The enzyme catalyses a 1,2-diacyl-sn-glycero-3-phospho-(1D-myo-inositol-3,4,5-trisphosphate) + H2O = a 1,2-diacyl-sn-glycero-3-phospho-(1D-myo-inositol-3,4-bisphosphate) + phosphate. In terms of biological role, has phosphatase activity toward PtdIns(4,5)P2 and PtdIns(3,4,5)P3. Required for the patterning of procambium and during the differentiation of vascular tissues. Acts before the acquisition of preprocambial identity. Seems to be also involved in the abscisic acid (ABA) signaling pathway. Acts redundantly with CVL1 for maintaining vascular continuity. Regulates phosphoinositide-dependent VAN3 localization. This chain is Type IV inositol polyphosphate 5-phosphatase 6, found in Arabidopsis thaliana (Mouse-ear cress).